Here is a 380-residue protein sequence, read N- to C-terminus: Growth-regulating factor 4 (380 aa).

The interval 1–21 is disordered; that stretch reads MDLQLKQWRSQQQNESEEQGS. In terms of domain architecture, QLQ spans 82-117; it reads FFSWAQWQELELQALIYRYMLAGASVPQELLLPIKK. In terms of domain architecture, WRC spans 151–195; it reads DPEPGRCKRTDGKKWRCSRDVVAGHKYCDRHIHRGRNRSRKPVET. 2 short sequence motifs (bipartite nuclear localization signal) span residues 156 to 166 and 184 to 191; these read RCKRTDGKKWR and RGRNRSRK. Disordered stretches follow at residues 222–270 and 284–330; these read NNNH…GRSD and RSSD…NMRN. 2 stretches are compositionally biased toward low complexity: residues 228–245 and 285–296; these read SSGS…SCSS and SSDSTSSPMSSS. Residues 297–320 are compositionally biased toward polar residues; sequence TCHLSISMPGNNTSSDVSLKLSTG.

It belongs to the GRF family. Strongly expressed in actively growing and developing tissues, such as roots, upper stems, and shoot tips containing the shoot apical meristem (SAM) and flower buds. Also expressed in mature flowers, but weakly expressed in mature stems and leaves.

It is found in the nucleus. Transcription activator that plays a role in the regulation of cell expansion in leaf and cotyledons tissues. Component of a network formed by miR396, the GRFs and their interacting factors (GIFs) acting in the regulation of meristem function, at least partially through the control of cell proliferation. The polypeptide is Growth-regulating factor 4 (GRF4) (Arabidopsis thaliana (Mouse-ear cress)).